The chain runs to 277 residues: Putative acetylornithine deacetylase (277 aa).

The catalysed reaction is N(2)-acetyl-L-ornithine + H2O = L-ornithine + acetate. It functions in the pathway amino-acid biosynthesis; L-arginine biosynthesis; L-ornithine from N(2)-acetyl-L-ornithine (linear): step 1/1. The polypeptide is Putative acetylornithine deacetylase (argE) (Leptospira biflexa).